The chain runs to 209 residues: APC/C-CDH1 modulator 1 (209 aa).

The tract at residues 1-38 (MISPSKKRTILSSKNINQKPRAVVKGNELRSPSKRRSQ) is disordered. The residue at position 48 (Ser-48) is a Phosphoserine. Thr-161 is subject to Phosphothreonine. Ser-202 carries the post-translational modification Phosphoserine.

As to quaternary structure, interacts with CDH1, BMH1 and BMH2.

Its function is as follows. Negative regulator of GDH1, the activator protein that regulates the ubiquitin ligase activity and substrate specificity of the anaphase promoting complex/cyclosome (APC/C), and which is required for exit from mitosis, cytokinesis and formation of prereplicative complexes in G1. The polypeptide is APC/C-CDH1 modulator 1 (ACM1) (Saccharomyces cerevisiae (strain ATCC 204508 / S288c) (Baker's yeast)).